A 470-amino-acid chain; its full sequence is Pyruvate kinase I (470 aa).

Arg32 contacts substrate. Asn34, Ser36, Asp66, and Thr67 together coordinate K(+). An ATP-binding site is contributed by 34 to 37 (NFSH). Residues Arg73 and Lys156 each contribute to the ATP site. Lys220 is a substrate binding site. Glu222 serves as a coordination point for Mg(2+). Gly245, Asp246, and Thr278 together coordinate substrate. Asp246 lines the Mg(2+) pocket.

It belongs to the pyruvate kinase family. In terms of assembly, homotetramer. Mg(2+) serves as cofactor. The cofactor is K(+).

It carries out the reaction pyruvate + ATP = phosphoenolpyruvate + ADP + H(+). Its pathway is carbohydrate degradation; glycolysis; pyruvate from D-glyceraldehyde 3-phosphate: step 5/5. With respect to regulation, belongs to type I PK; fructose 1,6-bisphosphate-activated. In terms of biological role, catalyzes the formation of pyruvate in the last step of glycolysis, it is irreversible under physiological conditions. The reaction is critical for the control of metabolic flux in the second part of glycolysis. The polypeptide is Pyruvate kinase I (pykF) (Salmonella typhimurium (strain LT2 / SGSC1412 / ATCC 700720)).